We begin with the raw amino-acid sequence, 338 residues long: Limbic system-associated membrane protein (338 aa).

The N-terminal stretch at 1–28 is a signal peptide; the sequence is MVGRVQPDRKQLPLVLLRLLCLLPTGLP. 3 consecutive Ig-like C2-type domains span residues 29 to 122, 132 to 214, and 219 to 304; these read VRSV…PKTS, PKIS…VKVT, and PTIT…ASLV. 2 N-linked (GlcNAc...) asparagine glycosylation sites follow: asparagine 40 and asparagine 66. A disulfide bond links cysteine 53 and cysteine 111. Tyrosine 94 carries the post-translational modification Phosphotyrosine. Residues asparagine 136 and asparagine 148 are each glycosylated (N-linked (GlcNAc...) asparagine). Cystine bridges form between cysteine 153/cysteine 197 and cysteine 239/cysteine 290. Residues asparagine 279, asparagine 287, and asparagine 300 are each glycosylated (N-linked (GlcNAc...) asparagine). A lipid anchor (GPI-anchor amidated asparagine; alternate) is attached at asparagine 315. Asparagine 315 carries N-linked (GlcNAc...) asparagine; alternate glycosylation. Residues 316 to 338 constitute a propeptide, removed in mature form; it reads GSISLAVPLWLLAASLFCLLSKC.

It belongs to the immunoglobulin superfamily. IgLON family. In terms of tissue distribution, expressed mostly by neurons comprising limbic-associated cortical and subcortical regions that function in cognition, emotion, memory, and learning.

The protein localises to the cell membrane. Its function is as follows. Mediates selective neuronal growth and axon targeting. Contributes to the guidance of developing axons and remodeling of mature circuits in the limbic system. Essential for normal growth of the hippocampal mossy fiber projection. The polypeptide is Limbic system-associated membrane protein (Lsamp) (Rattus norvegicus (Rat)).